A 118-amino-acid chain; its full sequence is Small ribosomal subunit protein uS13 (118 aa).

The disordered stretch occupies residues 96–118 (PLRGQRTRTNARTRKGPRKAIKK).

Belongs to the universal ribosomal protein uS13 family. Part of the 30S ribosomal subunit. Forms a loose heterodimer with protein S19. Forms two bridges to the 50S subunit in the 70S ribosome.

Functionally, located at the top of the head of the 30S subunit, it contacts several helices of the 16S rRNA. In the 70S ribosome it contacts the 23S rRNA (bridge B1a) and protein L5 of the 50S subunit (bridge B1b), connecting the 2 subunits; these bridges are implicated in subunit movement. Contacts the tRNAs in the A and P-sites. The polypeptide is Small ribosomal subunit protein uS13 (Stenotrophomonas maltophilia (strain K279a)).